A 357-amino-acid polypeptide reads, in one-letter code: MKASIYDFTLDELSQLLKPSFRAKQLYLWLYAKYKTSFKDMQNNFSKDFIAYLEREFTLRTIEITHVRKSVDGSKKYLFKSLRDNHTFEAVLLKMKDKKIDEKTNAILEGEKYTVCVSCQIGCQVGCSFCFTQKGGFVRNLKASEIIQQALLIKEDNNLPIEKALNIVFMGMGEPLNNLDEVCKAIEIFNTGMQISPRRITVSTSGVADKIPILAGKNLGVQLAISLHAVDDKTRSSLMPLNKKYNIECVLNEVRKWPLEQRKRVMFEYLLIKDLNDSLDCAKKLLKLLNGIKSKVNLILFNPHEGSKFERPSLESARMFADFLNSKGLLCTIRESKALDIEAACGQLREKKLSQQI.

The Proton acceptor role is filled by Glu89. In terms of domain architecture, Radical SAM core spans 109–340 (EGEKYTVCVS…CTIRESKALD (232 aa)). Cys116 and Cys345 are joined by a disulfide. The [4Fe-4S] cluster site is built by Cys123, Cys127, and Cys130. S-adenosyl-L-methionine is bound by residues 173–174 (GE), Ser203, 226–228 (SLH), and Asn302. Residue Cys345 is the S-methylcysteine intermediate of the active site.

This sequence belongs to the radical SAM superfamily. RlmN family. [4Fe-4S] cluster is required as a cofactor.

It localises to the cytoplasm. The enzyme catalyses adenosine(2503) in 23S rRNA + 2 reduced [2Fe-2S]-[ferredoxin] + 2 S-adenosyl-L-methionine = 2-methyladenosine(2503) in 23S rRNA + 5'-deoxyadenosine + L-methionine + 2 oxidized [2Fe-2S]-[ferredoxin] + S-adenosyl-L-homocysteine. It catalyses the reaction adenosine(37) in tRNA + 2 reduced [2Fe-2S]-[ferredoxin] + 2 S-adenosyl-L-methionine = 2-methyladenosine(37) in tRNA + 5'-deoxyadenosine + L-methionine + 2 oxidized [2Fe-2S]-[ferredoxin] + S-adenosyl-L-homocysteine. Functionally, specifically methylates position 2 of adenine 2503 in 23S rRNA and position 2 of adenine 37 in tRNAs. m2A2503 modification seems to play a crucial role in the proofreading step occurring at the peptidyl transferase center and thus would serve to optimize ribosomal fidelity. This is Dual-specificity RNA methyltransferase RlmN from Helicobacter pylori (strain HPAG1).